Consider the following 239-residue polypeptide: DNA repair protein RecO (239 aa).

The protein belongs to the RecO family.

Its function is as follows. Involved in DNA repair and RecF pathway recombination. The protein is DNA repair protein RecO of Bifidobacterium animalis subsp. lactis (strain AD011).